The chain runs to 445 residues: MNIEKIMSSLEAKHPGESEYLQAVKEVLLSIEDIYNQHPEFEKSKIIERLVEPDRIFTFRVTWVDDKGEVQTNLGYRVQFNNAIGPYKGGIRFHASVNLSILKFLGFEQTFKNALTTLPMGGGKGGSDFSPRGKSDAEIMRFCQAFMLELWRHLGPDMDVPAGDIGVGGREVGYMFGMYKKLTREFTGTFTGKGLEFGGSLIRPEATGFGGLYFVNQMLQTKGIDIKGKTVAISGFGNVAWGAATKATELGAKVVTISGPDGYIYDPNGISGEKIDYMLELRASGNDIVAPYADEFPGSTFVAGKRPWEVKADIALPCATQNELNGEDAKNLIDNNVLCVGEISNMGCTPEAIDLFIEHKTMYAPGKAVNAGGVATSGLEMSQNAMHLSWSAAEVDEKLHSIMHGIHAQCVKYGTEPDGYINYVKGANIAGFMKVAHAMMGQGII.

Residue Lys124 is part of the active site. Position 235–241 (235–241) interacts with NAD(+); it reads GFGNVAW.

This sequence belongs to the Glu/Leu/Phe/Val dehydrogenases family. In terms of assembly, homohexamer.

The enzyme catalyses L-glutamate + NAD(+) + H2O = 2-oxoglutarate + NH4(+) + NADH + H(+). The polypeptide is NAD-specific glutamate dehydrogenase (gdhB) (Bacteroides fragilis (strain YCH46)).